A 245-amino-acid polypeptide reads, in one-letter code: 3-deoxy-manno-octulosonate cytidylyltransferase (245 aa).

Belongs to the KdsB family.

The protein localises to the cytoplasm. It carries out the reaction 3-deoxy-alpha-D-manno-oct-2-ulosonate + CTP = CMP-3-deoxy-beta-D-manno-octulosonate + diphosphate. Its pathway is nucleotide-sugar biosynthesis; CMP-3-deoxy-D-manno-octulosonate biosynthesis; CMP-3-deoxy-D-manno-octulosonate from 3-deoxy-D-manno-octulosonate and CTP: step 1/1. It participates in bacterial outer membrane biogenesis; lipopolysaccharide biosynthesis. Its function is as follows. Activates KDO (a required 8-carbon sugar) for incorporation into bacterial lipopolysaccharide in Gram-negative bacteria. In Fusobacterium nucleatum subsp. nucleatum (strain ATCC 25586 / DSM 15643 / BCRC 10681 / CIP 101130 / JCM 8532 / KCTC 2640 / LMG 13131 / VPI 4355), this protein is 3-deoxy-manno-octulosonate cytidylyltransferase.